Here is a 393-residue protein sequence, read N- to C-terminus: Phosphoglycerate kinase (393 aa).

Substrate-binding positions include 21–23, Arg-37, 60–63, Arg-115, and Arg-148; these read DLN and HLGR. ATP is bound by residues Lys-199, Glu-321, and 347-350; that span reads GGDT.

It belongs to the phosphoglycerate kinase family. As to quaternary structure, monomer.

The protein localises to the cytoplasm. It catalyses the reaction (2R)-3-phosphoglycerate + ATP = (2R)-3-phospho-glyceroyl phosphate + ADP. Its pathway is carbohydrate degradation; glycolysis; pyruvate from D-glyceraldehyde 3-phosphate: step 2/5. This Dechloromonas aromatica (strain RCB) protein is Phosphoglycerate kinase.